Reading from the N-terminus, the 70-residue chain is DNA-directed RNA polymerase subunit omega (70 aa).

This sequence belongs to the RNA polymerase subunit omega family. As to quaternary structure, the RNAP catalytic core consists of 2 alpha, 1 beta, 1 beta' and 1 omega subunit. When a sigma factor is associated with the core the holoenzyme is formed, which can initiate transcription.

The enzyme catalyses RNA(n) + a ribonucleoside 5'-triphosphate = RNA(n+1) + diphosphate. Promotes RNA polymerase assembly. Latches the N- and C-terminal regions of the beta' subunit thereby facilitating its interaction with the beta and alpha subunits. The polypeptide is DNA-directed RNA polymerase subunit omega (Bacillus cytotoxicus (strain DSM 22905 / CIP 110041 / 391-98 / NVH 391-98)).